A 257-amino-acid chain; its full sequence is Diaminopimelate epimerase (257 aa).

Residues asparagine 6 and asparagine 57 each contribute to the substrate site. Cysteine 66 (proton donor) is an active-site residue. Substrate is bound by residues 67-68, asparagine 170, and 188-189; these read GN and ER. The active-site Proton acceptor is the cysteine 198. Position 199–200 (199–200) interacts with substrate; that stretch reads GT.

It belongs to the diaminopimelate epimerase family. In terms of assembly, homodimer.

The protein resides in the cytoplasm. The enzyme catalyses (2S,6S)-2,6-diaminopimelate = meso-2,6-diaminopimelate. It functions in the pathway amino-acid biosynthesis; L-lysine biosynthesis via DAP pathway; DL-2,6-diaminopimelate from LL-2,6-diaminopimelate: step 1/1. Catalyzes the stereoinversion of LL-2,6-diaminopimelate (L,L-DAP) to meso-diaminopimelate (meso-DAP), a precursor of L-lysine and an essential component of the bacterial peptidoglycan. The protein is Diaminopimelate epimerase of Chlorobaculum tepidum (strain ATCC 49652 / DSM 12025 / NBRC 103806 / TLS) (Chlorobium tepidum).